The sequence spans 381 residues: MESIGIVAPQTMHFAEPLRLQSGSVLGNYQLVVETYGELNAARSNAVLVCHALNASHHVAGVYADDPRSTGWWDNMVGPGKPLDTNRFFVIGVNNLGSCFGSTGPMSIDPSTGKPYGAKFPVVTVEDWVHAQARVADAFGIERFAAVMGGSLGGMQALAWSLMYPERVAHCIDIASTPKLSAQNIAFNEVARSAILSDPDFHGGDYYAHGVKPKRGLRVARMIGHITYLSDDDMAEKFGRALRRADGALDAYNFSFDVEFEVESYLRYQGDKFADYFDANTYLLITRALDYFDPAKAFDGNLTAALAHTQAKYLIASFSTDWRFAPARSREIVKALLDNKRTVSYAEIDAPHGHDAFLLDDARYHNLLRAYYERIANEVGA.

Residues 45–360 form the AB hydrolase-1 domain; it reads NAVLVCHALN…PHGHDAFLLD (316 aa). Residue S151 is the Nucleophile of the active site. R221 contacts substrate. Active-site residues include D321 and H354. D355 serves as a coordination point for substrate.

Belongs to the AB hydrolase superfamily. MetX family. As to quaternary structure, homodimer.

The protein localises to the cytoplasm. The enzyme catalyses L-homoserine + succinyl-CoA = O-succinyl-L-homoserine + CoA. Its pathway is amino-acid biosynthesis; L-methionine biosynthesis via de novo pathway; O-succinyl-L-homoserine from L-homoserine: step 1/1. Its function is as follows. Transfers a succinyl group from succinyl-CoA to L-homoserine, forming succinyl-L-homoserine. In Burkholderia cenocepacia (strain HI2424), this protein is Homoserine O-succinyltransferase.